The following is a 159-amino-acid chain: Cytochrome c-type biogenesis protein CcmE (159 aa).

Residues 1 to 23 (MSSQSFHNSPSLRVILKQRKKKR) are Cytoplasmic-facing. The helical; Signal-anchor for type II membrane protein transmembrane segment at 24–44 (LLIVLFCCLIIAIATSLITYA) threads the bilayer. The Periplasmic portion of the chain corresponds to 45-159 (LRNTVSFFRM…RLNKHHRVEK (115 aa)). His-138 and Tyr-142 together coordinate heme.

Belongs to the CcmE/CycJ family.

It is found in the cell inner membrane. Functionally, heme chaperone required for the biogenesis of c-type cytochromes. Transiently binds heme delivered by CcmC and transfers the heme to apo-cytochromes in a process facilitated by CcmF and CcmH. This is Cytochrome c-type biogenesis protein CcmE from Bartonella henselae (strain ATCC 49882 / DSM 28221 / CCUG 30454 / Houston 1) (Rochalimaea henselae).